We begin with the raw amino-acid sequence, 324 residues long: Ribosomal RNA small subunit methyltransferase H (324 aa).

S-adenosyl-L-methionine contacts are provided by residues 41–43 (GGH), aspartate 60, tyrosine 87, aspartate 111, and glutamine 118.

This sequence belongs to the methyltransferase superfamily. RsmH family.

Its subcellular location is the cytoplasm. The catalysed reaction is cytidine(1402) in 16S rRNA + S-adenosyl-L-methionine = N(4)-methylcytidine(1402) in 16S rRNA + S-adenosyl-L-homocysteine + H(+). In terms of biological role, specifically methylates the N4 position of cytidine in position 1402 (C1402) of 16S rRNA. This Nocardia farcinica (strain IFM 10152) protein is Ribosomal RNA small subunit methyltransferase H.